The sequence spans 158 residues: MSTSHTKLELALDLQIATDNKQLPTQQDFELWVRTALRNTMTEAELTVRVVDAEESQALNSTYRGKDKPTNVLSFPFEAPAEIELPLLGDLIICASVVEHEAIQQNKPLQAHWAHMVVHGCLHLLGYDHINDIEAEEMESIETQLIESLGFNNPYKEQ.

Zn(2+) contacts are provided by His-119, His-123, and His-129.

Belongs to the endoribonuclease YbeY family. Zn(2+) is required as a cofactor.

The protein localises to the cytoplasm. Functionally, single strand-specific metallo-endoribonuclease involved in late-stage 70S ribosome quality control and in maturation of the 3' terminus of the 16S rRNA. The chain is Endoribonuclease YbeY from Shewanella woodyi (strain ATCC 51908 / MS32).